The sequence spans 148 residues: MSVLDAAEIMDLIPNRYPILFMDKVDELNPGESIVCTKNVTINEEFFQGHFPGNPVMPGVLIIESLAQAASILILKTEKYQGKTAYLGAIDSAKFRKVVRPGDVLKLHVTMEKQRDNMGKVKCEAKVEDKVACSAELTFIVPDPKKKI.

His-50 is a catalytic residue.

The protein belongs to the thioester dehydratase family. FabZ subfamily.

Its subcellular location is the cytoplasm. The enzyme catalyses a (3R)-hydroxyacyl-[ACP] = a (2E)-enoyl-[ACP] + H2O. Its function is as follows. Involved in unsaturated fatty acids biosynthesis. Catalyzes the dehydration of short chain beta-hydroxyacyl-ACPs and long chain saturated and unsaturated beta-hydroxyacyl-ACPs. The chain is 3-hydroxyacyl-[acyl-carrier-protein] dehydratase FabZ from Lactobacillus helveticus (strain DPC 4571).